The sequence spans 562 residues: Potassium voltage-gated channel subfamily V member 2 (562 aa).

The span at 1–10 (MLKQSNERRW) shows a compositional bias: basic and acidic residues. Residues 1–34 (MLKQSNERRWSLSYKPWSTPETEDVPNTGSNQHR) form a disordered region. The Cytoplasmic segment spans residues 1–163 (MLKQSNERRW…TDEYFFDRDP (163 aa)). Residues 164-184 (AVFQLIYNFYTSGVLLVRDEL) traverse the membrane as a helical segment. The Extracellular portion of the chain corresponds to 185–269 (CPRSFLEELG…KPFSSVAAKA (85 aa)). A helical transmembrane segment spans residues 270–290 (MGVATNLFVLISVVALALNTV). At 291-344 (EEMQHQAEQGTGGGDPRPILEHVEMLCVAFFTLEFLLRLASTPNLQRFARSALN) the chain is on the cytoplasmic side. The chain crosses the membrane as a helical span at residues 345–365 (LVDLVAILPFYLQLLLECFTS). Residues 366–391 (EDQRHNKDSPREHDLETVGRVGKVGQ) are Extracellular-facing. Residues 392-412 (VLRIMRLMRIFRILKLARHST) form a helical; Voltage-sensor membrane-spanning segment. The Cytoplasmic segment spans residues 413 to 427 (GLRAFGFTLRQCYQQ). A helical membrane pass occupies residues 428–448 (VGCLMLFITMGIFSFSAAVYS). Residues 449–461 (VEHDVPGTNFTSI) are Extracellular-facing. An N-linked (GlcNAc...) asparagine glycan is attached at asparagine 457. The segment at residues 462–482 (LHAWWWAAVSISTVGYGDMYP) is an intramembrane region (pore-forming). Residues 474-479 (TVGYGD) carry the Selectivity filter motif. Residues 483 to 488 (ETHLGR) lie on the Extracellular side of the membrane. Residues 489–509 (LFAFLCIAFGIILNGMPISIL) traverse the membrane as a helical segment. Over 510-562 (YNKFSDYYSKLKAYEYTAIRRERGKVNFMQRATKKMAECLSESHAQSTTRQEN) the chain is Cytoplasmic.

The protein belongs to the potassium channel family. V (TC 1.A.1.2) subfamily. Kv8.2/KCNV2 sub-subfamily. Heteromultimer with KCNB1, KCNC1 and KCNF1. Does not form homomultimers.

The protein resides in the cell membrane. Its function is as follows. Potassium channel subunit. Modulates channel activity by shifting the threshold and the half-maximal activation to more negative values. This Mus musculus (Mouse) protein is Potassium voltage-gated channel subfamily V member 2 (Kcnv2).